The following is a 112-amino-acid chain: Large ribosomal subunit protein uL18 (112 aa).

Belongs to the universal ribosomal protein uL18 family. Part of the 50S ribosomal subunit; part of the 5S rRNA/L5/L18/L25 subcomplex. Contacts the 5S and 23S rRNAs.

This is one of the proteins that bind and probably mediate the attachment of the 5S RNA into the large ribosomal subunit, where it forms part of the central protuberance. The sequence is that of Large ribosomal subunit protein uL18 from Deinococcus deserti (strain DSM 17065 / CIP 109153 / LMG 22923 / VCD115).